The following is a 930-amino-acid chain: MASGGKGEKILVSVRVRPQNEKEKARNDICDWECVNNTTIVCNNNLPERSLFPSTYTFDKVFGFDSPTKQVYEDGAKEVALCVLGGINSSIFAYGQTSSGKTYTMCGITKFAMDDIFCYIQKHTDRKFTLKFSAIEIYNEAVRDLLSGDNNQRRLLDDPERGTVVEKLIEETIQDRTHLEELLTVCETQRKIGETSLNEVSSRSHQILRLTIESTGREYSPDSSSTLAASVCFIDLAGSERASQTLSAGTRLKEGCHINRSLLTLGTVIRKLRFDPCDIAQSQVENLLKSTAEERSSRMDEQSMFSSMDFDADFRRRSYDSTDLGEPSIINNLTERNFEFLENSEEDDFLLDDKTPQFSRHNLYDDWEELVQITDERLEDACKEVRCIEPEAEQSSGQPAACESHDSLDDIKAENEDMEISTPAEKENVDLSLKTIDVNAKPETYELTLKNSDLEIGPSVEAQESQESVNEEEQMKNEERKMSPSTKQAEQCLNKEENAQSEQQSTEDCELNSLPINNQSEATVEVELTPNDAKLDEDATSRDKWESKQQQEADKDCNESSVCKNIGTDDNDNDTYMALKEKVKEMQKKIEYLMSMHTAEQQQSPSFRRDFKSPPEYFTAKRSRSCRENLLSVRSPHWFESLEVSNNTSPTWRVMQTKASPGRPNTSSISFDSGSSTSIDTRSLKDYDPEMGNSFREFVAGLEEMAKKHHSIDSTPELDYGIPYAPTKTERMEIRPESPADSVAANGQYSISSSDFERQQRKIIELWAACNVPLVHRTYFFLLFKGDPSDYVYMEVELRRLSFLKQTISNDMETSRMQTVKALTREKEWISKQLPKKFPWNQRIGLYQKWGVEVNSKQRSLQVAHKLWTNTQDMDHIKESASLVAKLLGFVEPSRMPKEMFGLSLLPRTENVKSSGWRFTKSFSAIRLTR.

The region spanning 9 to 273 is the Kinesin motor domain; that stretch reads KILVSVRVRP…TLGTVIRKLR (265 aa). 95–102 is a binding site for ATP; it reads GQTSSGKT. Disordered stretches follow at residues 449-569 and 655-686; these read LKNS…IGTD and MQTK…SLKD. Over residues 459 to 468 the composition is skewed to low complexity; that stretch reads SVEAQESQES. Composition is skewed to basic and acidic residues over residues 473–482 and 533–558; these read EQMKNEERKM and AKLD…KDCN. Over residues 666 to 681 the composition is skewed to low complexity; it reads TSSISFDSGSSTSIDT. Lys805 participates in a covalent cross-link: Glycyl lysine isopeptide (Lys-Gly) (interchain with G-Cter in ubiquitin).

Belongs to the TRAFAC class myosin-kinesin ATPase superfamily. Kinesin family. KIN-7 subfamily.

The protein is Kinesin-like protein KIN-7J of Arabidopsis thaliana (Mouse-ear cress).